The following is a 257-amino-acid chain: Phycoerythrobilin:ferredoxin oxidoreductase (257 aa).

It belongs to the HY2 family.

The catalysed reaction is (3Z)-phycoerythrobilin + oxidized 2[4Fe-4S]-[ferredoxin] = 15,16-dihydrobiliverdin + reduced 2[4Fe-4S]-[ferredoxin] + 2 H(+). Its function is as follows. Catalyzes the two-electron reduction of the C2 and C3(1) diene system of 15,16-dihydrobiliverdin. The chain is Phycoerythrobilin:ferredoxin oxidoreductase from Synechococcus sp. (strain CC9311).